The sequence spans 748 residues: EF-hand domain-containing family member C2 (748 aa).

3 consecutive DM10 domains span residues 75–182 (DKQV…VKMG), 226–366 (DRQV…RSKY), and 428–535 (VSNV…EQHA). EF-hand domains follow at residues 556–591 (EQQK…LDVE) and 631–666 (EKFS…FRLP).

The protein resides in the cytoplasm. Its subcellular location is the cytoskeleton. It is found in the cilium axoneme. Microtubule inner protein (MIP) part of the dynein-decorated doublet microtubules (DMTs) in cilia axoneme, which is required for motile cilia beating. In Danio rerio (Zebrafish), this protein is EF-hand domain-containing family member C2 (efhc2).